A 160-amino-acid polypeptide reads, in one-letter code: Glyoxalase domain-containing protein 5 (160 aa).

Residues 33-153 (RLDHLVLTVR…DQNLIEVSNY (121 aa)) form the VOC domain.

This sequence belongs to the glyoxalase I family.

The polypeptide is Glyoxalase domain-containing protein 5 (glod5) (Xenopus tropicalis (Western clawed frog)).